Reading from the N-terminus, the 188-residue chain is Ribosome maturation factor RimM (188 aa).

Residues 93 to 166 form the PRC barrel domain; that stretch reads EDEYYDHQLI…RAVIDPPPGL (74 aa).

The protein belongs to the RimM family. Binds ribosomal protein uS19.

The protein localises to the cytoplasm. Functionally, an accessory protein needed during the final step in the assembly of 30S ribosomal subunit, possibly for assembly of the head region. Essential for efficient processing of 16S rRNA. May be needed both before and after RbfA during the maturation of 16S rRNA. It has affinity for free ribosomal 30S subunits but not for 70S ribosomes. This is Ribosome maturation factor RimM from Streptomyces coelicolor (strain ATCC BAA-471 / A3(2) / M145).